The chain runs to 94 residues: Cell division topological specificity factor (94 aa).

This sequence belongs to the MinE family.

Its function is as follows. Prevents the cell division inhibition by proteins MinC and MinD at internal division sites while permitting inhibition at polar sites. This ensures cell division at the proper site by restricting the formation of a division septum at the midpoint of the long axis of the cell. The polypeptide is Cell division topological specificity factor (Beijerinckia indica subsp. indica (strain ATCC 9039 / DSM 1715 / NCIMB 8712)).